A 455-amino-acid chain; its full sequence is tRNA modification GTPase MnmE (455 aa).

Positions 26, 86, and 125 each coordinate (6S)-5-formyl-5,6,7,8-tetrahydrofolate. Residues 222 to 376 enclose the TrmE-type G domain; that stretch reads GLKTAIIGRP…VEEKINQIFF (155 aa). Asparagine 232 contacts K(+). GTP contacts are provided by residues 232-237, 251-257, and 276-279; these read NVGKSS, TDIAGTT, and DTAG. Serine 236 serves as a coordination point for Mg(2+). Residues threonine 251, isoleucine 253, and threonine 256 each coordinate K(+). Mg(2+) is bound at residue threonine 257. Lysine 455 provides a ligand contact to (6S)-5-formyl-5,6,7,8-tetrahydrofolate.

This sequence belongs to the TRAFAC class TrmE-Era-EngA-EngB-Septin-like GTPase superfamily. TrmE GTPase family. As to quaternary structure, homodimer. Heterotetramer of two MnmE and two MnmG subunits. The cofactor is K(+).

The protein resides in the cytoplasm. Functionally, exhibits a very high intrinsic GTPase hydrolysis rate. Involved in the addition of a carboxymethylaminomethyl (cmnm) group at the wobble position (U34) of certain tRNAs, forming tRNA-cmnm(5)s(2)U34. The sequence is that of tRNA modification GTPase MnmE from Lactococcus lactis subsp. cremoris (strain SK11).